Reading from the N-terminus, the 404-residue chain is Phosphopentomutase (404 aa).

6 residues coordinate Mn(2+): aspartate 10, aspartate 297, histidine 302, aspartate 338, histidine 339, and histidine 350.

The protein belongs to the phosphopentomutase family. Mn(2+) is required as a cofactor.

It localises to the cytoplasm. The enzyme catalyses 2-deoxy-alpha-D-ribose 1-phosphate = 2-deoxy-D-ribose 5-phosphate. The catalysed reaction is alpha-D-ribose 1-phosphate = D-ribose 5-phosphate. It functions in the pathway carbohydrate degradation; 2-deoxy-D-ribose 1-phosphate degradation; D-glyceraldehyde 3-phosphate and acetaldehyde from 2-deoxy-alpha-D-ribose 1-phosphate: step 1/2. Functionally, isomerase that catalyzes the conversion of deoxy-ribose 1-phosphate (dRib-1-P) and ribose 1-phosphate (Rib-1-P) to deoxy-ribose 5-phosphate (dRib-5-P) and ribose 5-phosphate (Rib-5-P), respectively. This is Phosphopentomutase from Colwellia psychrerythraea (strain 34H / ATCC BAA-681) (Vibrio psychroerythus).